The following is a 420-amino-acid chain: Dynein axonemal assembly factor 4 (420 aa).

One can recognise a CS domain in the interval 3–87 (LQVSDYSWQQ…KEAAMWETLS (85 aa)). The interval 7 to 103 (DYSWQQTKTA…ETMQRIREKS (97 aa)) is mediates interaction with ESR1 and STUB1. TPR repeat units follow at residues 290-323 (PEWLKDKGNKLFATENYLAAINAYNLAIRLNNKM), 324-357 (PLLYLNRAACHLKLKNLHKAIEDSSKALELLMPP), and 366-399 (MKAHVRRGTAFCQLELYVEGLQDYEAALKIDPSN).

Interacts with ZMYND10. Interacts with STUB1. Interacts with ESR1 and ESR2. Interacts with DNAAF2. Interacts with CCT3, CCT4, CCT5 and CCT8. Interacts with DNAAF6/PIH1D3.

The protein resides in the nucleus. The protein localises to the cytoplasm. Its subcellular location is the cell projection. It is found in the neuron projection. It localises to the dynein axonemal particle. Involved in neuronal migration during development of the cerebral neocortex. May regulate the stability and proteasomal degradation of the estrogen receptors that play an important role in neuronal differentiation, survival and plasticity. Axonemal dynein assembly factor required for ciliary motility. The sequence is that of Dynein axonemal assembly factor 4 from Pongo pygmaeus (Bornean orangutan).